Here is a 419-residue protein sequence, read N- to C-terminus: Keratin, type II cytoskeletal I (419 aa).

Residues 1-16 (KGSTKRANLDPLFEKY) are linker 1. An IF rod domain is found at 1–275 (KGSTKRANLD…YMLEGEEGRM (275 aa)). The interval 17–108 (ISDLKRYLDN…TLFAAELSQV (92 aa)) is coil 1B. The segment at 109 to 132 (HDQVTDTSVVLTMDNNRDLNLDSI) is linker 12. The tract at residues 133 to 271 (IKEVKCQYEQ…STYRYMLEGE (139 aa)) is coil 2. Residues 272-419 (EGRMSGQISN…STTSTTKRSY (148 aa)) form a tail region.

Belongs to the intermediate filament family. As to quaternary structure, heterotetramer of two type I and two type II keratins.

This Xenopus laevis (African clawed frog) protein is Keratin, type II cytoskeletal I.